The chain runs to 366 residues: Anhydro-N-acetylmuramic acid kinase (366 aa).

15-22 (GTSLDGVD) is an ATP binding site.

Belongs to the anhydro-N-acetylmuramic acid kinase family.

It carries out the reaction 1,6-anhydro-N-acetyl-beta-muramate + ATP + H2O = N-acetyl-D-muramate 6-phosphate + ADP + H(+). Its pathway is amino-sugar metabolism; 1,6-anhydro-N-acetylmuramate degradation. The protein operates within cell wall biogenesis; peptidoglycan recycling. Its function is as follows. Catalyzes the specific phosphorylation of 1,6-anhydro-N-acetylmuramic acid (anhMurNAc) with the simultaneous cleavage of the 1,6-anhydro ring, generating MurNAc-6-P. Is required for the utilization of anhMurNAc either imported from the medium or derived from its own cell wall murein, and thus plays a role in cell wall recycling. This Hydrogenovibrio crunogenus (strain DSM 25203 / XCL-2) (Thiomicrospira crunogena) protein is Anhydro-N-acetylmuramic acid kinase.